Consider the following 276-residue polypeptide: 4-chlorobenzoyl coenzyme A dehalogenase-1 (276 aa).

66–71 provides a ligand contact to substrate; sequence AGFDLE. His93 serves as the catalytic Proton acceptor. Position 117 (Gly117) interacts with substrate. The active-site Nucleophile is Asp148. Substrate is bound at residue Arg261.

This sequence belongs to the enoyl-CoA hydratase/isomerase family. As to quaternary structure, homotetramer.

It catalyses the reaction 4-chlorobenzoyl-CoA + H2O = 4-hydroxybenzoyl-CoA + chloride + H(+). Its pathway is xenobiotic degradation; 4-chlorobenzoate degradation; 4-hydroxybenzoate from 4-chlorobenzoate: step 2/3. Its function is as follows. Dehalogenates 4-chlorobenzoyl-CoA, 4-iodobenzoyl-CoA, 4-bromobenzoyl-CoA and, at a slower rate, 4-fluorobenzoyl-CoA. Does not dehalogenate 2-chlorobenzoyl-CoA or 3-chlorobenzoyl-CoA. The protein is 4-chlorobenzoyl coenzyme A dehalogenase-1 of Arthrobacter sp.